Here is a 356-residue protein sequence, read N- to C-terminus: V-type proton ATPase subunit d (356 aa).

This sequence belongs to the V-ATPase V0D/AC39 subunit family. V-ATPase is a heteromultimeric enzyme composed of a peripheral catalytic V1 complex (components A to H) attached to an integral membrane V0 proton pore complex (components: a, c, c', c'' and d).

Its function is as follows. Subunit of the integral membrane V0 complex of vacuolar ATPase. Vacuolar ATPase is responsible for acidifying a variety of intracellular compartments in eukaryotic cells, thus providing most of the energy required for transport processes in the vacuolar system. The protein is V-type proton ATPase subunit d (vatD-1) of Dictyostelium discoideum (Social amoeba).